Consider the following 603-residue polypeptide: DNA mismatch repair protein MutL (603 aa).

It belongs to the DNA mismatch repair MutL/HexB family.

Its function is as follows. This protein is involved in the repair of mismatches in DNA. It is required for dam-dependent methyl-directed DNA mismatch repair. May act as a 'molecular matchmaker', a protein that promotes the formation of a stable complex between two or more DNA-binding proteins in an ATP-dependent manner without itself being part of a final effector complex. The sequence is that of DNA mismatch repair protein MutL from Nitrobacter hamburgensis (strain DSM 10229 / NCIMB 13809 / X14).